The sequence spans 100 residues: uncharacterized protein (100 aa).

This is an uncharacterized protein from Acidianus convivator (ATV).